The chain runs to 337 residues: DNA-directed RNA polymerase subunit alpha (337 aa).

The tract at residues 1–226 (MLIAQRPTLT…ELFGLARELN (226 aa)) is alpha N-terminal domain (alpha-NTD). The tract at residues 243 to 337 (LAADLALEIE…DTSFAEDEQL (95 aa)) is alpha C-terminal domain (alpha-CTD). Residues 315–337 (FDPSAVVNDFEDDDTSFAEDEQL) are disordered. Residues 323–337 (DFEDDDTSFAEDEQL) show a composition bias toward acidic residues.

It belongs to the RNA polymerase alpha chain family. Homodimer. The RNAP catalytic core consists of 2 alpha, 1 beta, 1 beta' and 1 omega subunit. When a sigma factor is associated with the core the holoenzyme is formed, which can initiate transcription.

The catalysed reaction is RNA(n) + a ribonucleoside 5'-triphosphate = RNA(n+1) + diphosphate. In terms of biological role, DNA-dependent RNA polymerase catalyzes the transcription of DNA into RNA using the four ribonucleoside triphosphates as substrates. The sequence is that of DNA-directed RNA polymerase subunit alpha from Kineococcus radiotolerans (strain ATCC BAA-149 / DSM 14245 / SRS30216).